A 560-amino-acid chain; its full sequence is Putative transport protein VV1438 (560 aa).

A run of 5 helical transmembrane segments spans residues 5–25, 37–57, 66–86, 91–111, and 164–184; these read VVLL…AIGL, LGNS…GFSF, FMLF…GIFF, HYFT…YFAS, and VGYA…AKLL. 2 RCK C-terminal domains span residues 203–292 and 293–376; these read RGLG…FRNG and KEVF…RIGF. 6 helical membrane-spanning segments follow: residues 386–406, 409–429, 443–463, 478–498, 506–526, and 539–559; these read LLAF…TMTF, VSFS…LGFL, ALNM…GLSA, IIGI…LVGA, ALLF…DIVN, and AGTY…LIIL.

It belongs to the AAE transporter (TC 2.A.81) family. YbjL subfamily.

The protein resides in the cell membrane. In Vibrio vulnificus (strain YJ016), this protein is Putative transport protein VV1438.